Consider the following 538-residue polypeptide: Phosphoenolpyruvate carboxykinase (ATP) (538 aa).

Arginine 64, tyrosine 205, and lysine 211 together coordinate substrate. ATP contacts are provided by residues lysine 211, histidine 230, and 246–254; that span reads GLSGTGKTT. Residues lysine 211 and histidine 230 each coordinate Mn(2+). Aspartate 267 contributes to the Mn(2+) binding site. Residues glutamate 295, arginine 331, 447–448, and threonine 453 each bind ATP; that span reads RI. Arginine 331 provides a ligand contact to substrate.

It belongs to the phosphoenolpyruvate carboxykinase (ATP) family. Monomer. Mn(2+) is required as a cofactor.

The protein resides in the cytoplasm. It carries out the reaction oxaloacetate + ATP = phosphoenolpyruvate + ADP + CO2. The protein operates within carbohydrate biosynthesis; gluconeogenesis. Involved in the gluconeogenesis. Catalyzes the conversion of oxaloacetate (OAA) to phosphoenolpyruvate (PEP) through direct phosphoryl transfer between the nucleoside triphosphate and OAA. The protein is Phosphoenolpyruvate carboxykinase (ATP) of Haemophilus influenzae (strain ATCC 51907 / DSM 11121 / KW20 / Rd).